We begin with the raw amino-acid sequence, 187 residues long: METSTSSSQSLIPLPMSKKDYSSEIICAFDIGAKNPARTVLEVKDNSVRVLDISKLDWSSDWERRIAQDLSQYEYTTVLLERQPRRSPYVKFIYFIKGFLYHTSAAKVICVSPVMSGNSYRDRKKRSVEAFLDWMDTFGLRDSVPDRRKLDDVADSFNLAMRYVLDKWNTNYTPYNRCKYRNYIKKM.

It belongs to the RuvC family. Poxviruses-type subfamily. Mg(2+) serves as cofactor.

Its function is as follows. Plays a role in DNA replication by cleaving viral DNA concatamers to yield unit-length viral genomes. The concatamer junctions contain inverted repeat sequences that can be extruded as cruciforms, yielding Holliday junctions that A22 protein cleaves. In Cynomys gunnisoni (Gunnison's prairie dog), this protein is Resolvase OPG149 (OPG149).